Reading from the N-terminus, the 239-residue chain is Norbelladine 4'-O-methyltransferase 4 (239 aa).

Residues Val-55, Glu-77, 79-80, Ser-85, Asp-103, and Ala-132 each bind S-adenosyl-L-methionine; that span reads GV. Asp-155 serves as a coordination point for a divalent metal cation. Asp-157 contacts S-adenosyl-L-methionine. Positions 181 and 182 each coordinate a divalent metal cation.

Belongs to the class I-like SAM-binding methyltransferase superfamily. Cation-dependent O-methyltransferase family. Mg(2+) is required as a cofactor.

The enzyme catalyses norbelladine + S-adenosyl-L-methionine = 4'-O-methylnorbelladine + S-adenosyl-L-homocysteine + H(+). The protein operates within alkaloid biosynthesis. In terms of biological role, 4'-O-methyltransferase converting norbelladine to 4'-O-methylnorbelladine. 4'-O-methylnorbelladine is a precursor to all Amaryllidaceae alkaloids such as galanthamine, lycorine and haemanthamine, and including haemanthamine- and crinamine-type alkaloids, promising anticancer agents. The protein is Norbelladine 4'-O-methyltransferase 4 of Narcissus aff. pseudonarcissus MK-2014 (Daffodil).